Reading from the N-terminus, the 310-residue chain is uncharacterized protein (310 aa).

This is an uncharacterized protein from Acanthamoeba polyphaga (Amoeba).